The chain runs to 138 residues: Large ribosomal subunit protein uL16 (138 aa).

The segment covering 1-13 has biased composition (basic residues); that stretch reads MLQPSRRKFRKEQ. A disordered region spans residues 1–20; sequence MLQPSRRKFRKEQKGRNTGV.

This sequence belongs to the universal ribosomal protein uL16 family. Part of the 50S ribosomal subunit.

Its function is as follows. Binds 23S rRNA and is also seen to make contacts with the A and possibly P site tRNAs. This chain is Large ribosomal subunit protein uL16, found in Leptothrix cholodnii (strain ATCC 51168 / LMG 8142 / SP-6) (Leptothrix discophora (strain SP-6)).